A 494-amino-acid polypeptide reads, in one-letter code: Aspartyl/glutamyl-tRNA(Asn/Gln) amidotransferase subunit B (494 aa).

It belongs to the GatB/GatE family. GatB subfamily. As to quaternary structure, heterotrimer of A, B and C subunits.

The catalysed reaction is L-glutamyl-tRNA(Gln) + L-glutamine + ATP + H2O = L-glutaminyl-tRNA(Gln) + L-glutamate + ADP + phosphate + H(+). It carries out the reaction L-aspartyl-tRNA(Asn) + L-glutamine + ATP + H2O = L-asparaginyl-tRNA(Asn) + L-glutamate + ADP + phosphate + 2 H(+). Its function is as follows. Allows the formation of correctly charged Asn-tRNA(Asn) or Gln-tRNA(Gln) through the transamidation of misacylated Asp-tRNA(Asn) or Glu-tRNA(Gln) in organisms which lack either or both of asparaginyl-tRNA or glutaminyl-tRNA synthetases. The reaction takes place in the presence of glutamine and ATP through an activated phospho-Asp-tRNA(Asn) or phospho-Glu-tRNA(Gln). The protein is Aspartyl/glutamyl-tRNA(Asn/Gln) amidotransferase subunit B of Synechococcus sp. (strain CC9605).